We begin with the raw amino-acid sequence, 268 residues long: Unknown seed protein USP (268 aa).

Residues 1 to 25 (MEFAHLTVLSLFCLAFVGITATSSG) form the signal peptide. A BURP domain is found at 68–259 (LFFEHDLHPG…GNKAAAWVPN (192 aa)).

In terms of tissue distribution, expressed in seeds. Detected only in the embryo. In germinating seedlings, detected in roots, root caps, root hairs, vascular bundle, mesophyll cells and epidermal cells of the cotyledons and the hypocotyl.

It is found in the golgi apparatus. Its subcellular location is the golgi stack. The protein resides in the prevacuolar compartment. Associated with the protein storage vacuole formation. The protein is Unknown seed protein USP of Vicia faba (Broad bean).